Consider the following 276-residue polypeptide: Non-heme chloroperoxidase (276 aa).

One can recognise an AB hydrolase-1 domain in the interval 24–254 (PVVFHHGWPL…NATLKSYEGL (231 aa)). Catalysis depends on residues Ser97, Asp227, and His256.

Belongs to the AB hydrolase superfamily. Bacterial non-heme haloperoxidase / perhydrolase family. Homodimer.

The chain is Non-heme chloroperoxidase (cpo) from Streptomyces lividans.